A 274-amino-acid polypeptide reads, in one-letter code: Diaminopimelate epimerase (274 aa).

Positions 11, 44, and 64 each coordinate substrate. Cys-73 acts as the Proton donor in catalysis. Substrate contacts are provided by residues 74-75 (GN), Asn-157, Asn-190, and 208-209 (ER). The active-site Proton acceptor is the Cys-217. 218-219 (GS) is a binding site for substrate.

Belongs to the diaminopimelate epimerase family. Homodimer.

The protein localises to the cytoplasm. It catalyses the reaction (2S,6S)-2,6-diaminopimelate = meso-2,6-diaminopimelate. Its pathway is amino-acid biosynthesis; L-lysine biosynthesis via DAP pathway; DL-2,6-diaminopimelate from LL-2,6-diaminopimelate: step 1/1. Functionally, catalyzes the stereoinversion of LL-2,6-diaminopimelate (L,L-DAP) to meso-diaminopimelate (meso-DAP), a precursor of L-lysine and an essential component of the bacterial peptidoglycan. This is Diaminopimelate epimerase from Haemophilus influenzae (strain PittEE).